Consider the following 602-residue polypeptide: MTTQVPKRLRQPIVVVLGHVDHGKTTLLDKIRGTAVVKKEPGEMTQEVGASFVPTSVIEKISEPLKKSFPIKLEIPGLLFIDTPGHELFSNLRKRGGSVADIAILVVDIVEGIQKQTLESIEILKSRKVPFIVAANKIDRINGWKAQDTYSFLESINKQEQRVRDNLDKQVYNLVIQLAEQGFNAERFDRIRDFTKTVAIIPVSAKTGEGIAEVLAILAGLTQNYMKNKLKFAEGPAKGVILEVKELQGLGYTADVVIYEGILRKNDIIVLAGIDGPIVTKVRAILVPRPLQDIKLAKSDLAQIDEVYAASGVKVYAQNLETALAGSPIYVAENNEEVEKYKKIIQEEVSAVRYYNSSVYGIIVKADSLGSLEAIVSSLERRNIPIRLADIGPISKRDITEAEIVAEKAKEYGIIAAFRVKPLSGIEIPEKIKLISDDIIYQLMDNIEKYIEDIKESEKRKTLETIVLPGKIKIIPGYVFRRSDPVIVGVEVLGGIIRPKYGLIKKDGRRVGEVLQIQDNKKSVDRASKGMEVAVSIKGNIMVGRQVEEGEVLYTDVPKEDLQILMEKYKDIVTDDMIEVIKEIIRIKRTQDATYGLGLQFQ.

In terms of domain architecture, tr-type G spans 9-229; that stretch reads LRQPIVVVLG…GLTQNYMKNK (221 aa). The interval 18 to 25 is G1; sequence GHVDHGKT. GTP is bound at residue 18–25; sequence GHVDHGKT. The segment at 43–47 is G2; sequence EMTQE. Residues 82–85 form a G3 region; that stretch reads DTPG. Residues 82-86 and 136-139 contribute to the GTP site; these read DTPGH and NKID. Residues 136-139 are G4; it reads NKID. The interval 204–206 is G5; the sequence is SAK.

It belongs to the TRAFAC class translation factor GTPase superfamily. Classic translation factor GTPase family. IF-2 subfamily.

Function in general translation initiation by promoting the binding of the formylmethionine-tRNA to ribosomes. Seems to function along with eIF-2. This chain is Probable translation initiation factor IF-2 (infB), found in Sulfolobus acidocaldarius (strain ATCC 33909 / DSM 639 / JCM 8929 / NBRC 15157 / NCIMB 11770).